We begin with the raw amino-acid sequence, 139 residues long: Pre-hexon-linking protein VIII (139 aa).

A propeptide spanning residues 35 to 69 (GAAGDYFKSPTSARTLIPLTASCLRPDGVFQLGGG) is cleaved from the precursor.

It belongs to the adenoviridae hexon-linking protein family. In terms of assembly, interacts with the peripentonal hexons as well as the hexons in the facets. Part of a complex composed of the core-capsid bridging protein, the endosome lysis protein VI and the hexon-linking protein VIII; these interactions bridge the virus core to the capsid. Cleaved by the viral protease during virion maturation. May cause the middle segment to be shed from the capsid.

It localises to the host nucleus. The protein resides in the virion. Structural component of the virion that acts as a cement protein on the capsid interior and which glue the peripentonal hexons and group-of-nine hexons together. This is Pre-hexon-linking protein VIII from Bovine adenovirus B serotype 3 (BAdV-3).